The chain runs to 141 residues: Cystatin (141 aa).

The first 26 residues, 1–26 (MVRSQLPVAAPLRLLCALLLLPSATM), serve as a signal peptide directing secretion. In terms of domain architecture, Cystatin spans 29 to 129 (GGLSPRSVTD…CHFQVWSRPW (101 aa)). Positions 73–77 (QVVSG) match the Secondary area of contact motif. 2 disulfides stabilise this stretch: cysteine 91/cysteine 107 and cysteine 120/cysteine 140.

The protein belongs to the cystatin family. Expressed at a low level by the venom gland (at protein level).

It localises to the secreted. Inhibits various C1 cysteine proteases including cathepsin L, papain and cathepsin B. This protein has no toxic activity and its function in the venom is unknown. It may play a role as a housekeeping or regulatory protein. The polypeptide is Cystatin (Micropechis ikaheca (New Guinean small-eyed snake)).